Consider the following 572-residue polypeptide: Probable terpene synthase 13 (572 aa).

Mg(2+) contacts are provided by Asp326, Asp330, and Glu478. Positions 326–330 match the DDXXD motif motif; it reads DDIFD.

The protein belongs to the terpene synthase family. Requires Mg(2+) as cofactor.

Functionally, probable sesquiterpene synthase. The polypeptide is Probable terpene synthase 13 (TPS13) (Ricinus communis (Castor bean)).